Consider the following 152-residue polypeptide: Deoxyuridine 5'-triphosphate nucleotidohydrolase (152 aa).

Residues 71-73 (RSG), Asn84, 88-90 (LID), and Met98 each bind substrate.

This sequence belongs to the dUTPase family. Mg(2+) is required as a cofactor.

The catalysed reaction is dUTP + H2O = dUMP + diphosphate + H(+). It participates in pyrimidine metabolism; dUMP biosynthesis; dUMP from dCTP (dUTP route): step 2/2. Its function is as follows. This enzyme is involved in nucleotide metabolism: it produces dUMP, the immediate precursor of thymidine nucleotides and it decreases the intracellular concentration of dUTP so that uracil cannot be incorporated into DNA. The protein is Deoxyuridine 5'-triphosphate nucleotidohydrolase of Shewanella piezotolerans (strain WP3 / JCM 13877).